Here is a 121-residue protein sequence, read N- to C-terminus: Prefoldin subunit beta (121 aa).

The protein belongs to the prefoldin subunit beta family. In terms of assembly, heterohexamer of two alpha and four beta subunits.

Its subcellular location is the cytoplasm. In terms of biological role, molecular chaperone capable of stabilizing a range of proteins. Seems to fulfill an ATP-independent, HSP70-like function in archaeal de novo protein folding. In Methanoculleus marisnigri (strain ATCC 35101 / DSM 1498 / JR1), this protein is Prefoldin subunit beta.